Reading from the N-terminus, the 451-residue chain is Phosphoglucosamine mutase (451 aa).

S102 acts as the Phosphoserine intermediate in catalysis. Mg(2+) contacts are provided by S102, D242, D244, and D246. S102 carries the post-translational modification Phosphoserine.

It belongs to the phosphohexose mutase family. Mg(2+) is required as a cofactor. In terms of processing, activated by phosphorylation.

The enzyme catalyses alpha-D-glucosamine 1-phosphate = D-glucosamine 6-phosphate. Its function is as follows. Catalyzes the conversion of glucosamine-6-phosphate to glucosamine-1-phosphate. The protein is Phosphoglucosamine mutase of Staphylococcus aureus (strain Mu3 / ATCC 700698).